Consider the following 315-residue polypeptide: Olfactory receptor 4K3 (315 aa).

Over 1 to 25 the chain is Extracellular; sequence MAWSNQSAVTEFILRGLSSSLELQI. Asn5 carries an N-linked (GlcNAc...) asparagine glycan. The chain crosses the membrane as a helical span at residues 26–49; sequence FYFLFFSIVYAATVLGNLLIVVTI. At 50–57 the chain is on the cytoplasmic side; that stretch reads ASEPHLHS. A helical transmembrane segment spans residues 58 to 79; that stretch reads PMYFLLGNLSFIDMSLASFATP. Over 80–100 the chain is Extracellular; the sequence is KMIADFLREHKAISFEGCMTQ. Residues Cys97 and Cys189 are joined by a disulfide bond. The helical transmembrane segment at 101 to 120 threads the bilayer; sequence MFFLHLLGGAEIVLLISMSF. The Cytoplasmic segment spans residues 121–139; that stretch reads DRYVAICKPLHYLTIMSRR. The chain crosses the membrane as a helical span at residues 140-158; that stretch reads MCVGLVILSWIVGIFHALS. At 159–195 the chain is on the extracellular side; the sequence is QLAFTVNLPFCGPNEVDSFFCDLPLVIKLACVDTYIL. The helical transmembrane segment at 196-219 threads the bilayer; the sequence is GVFMISTSGMIALVCFILLVISYT. The Cytoplasmic segment spans residues 220–235; the sequence is IILVTVRQRSSGGSSK. The chain crosses the membrane as a helical span at residues 236–258; the sequence is ALSTCSAHFTVVTLFFGPCTFIY. Topologically, residues 259–269 are extracellular; that stretch reads VWPFTNFPIDK. A helical membrane pass occupies residues 270–289; that stretch reads VLSVFYTIYTPLLNPVIYTV. Residues 290 to 315 are Cytoplasmic-facing; sequence RNKDVKYSMRKLSSHIFKSRKTDHTP.

This sequence belongs to the G-protein coupled receptor 1 family.

The protein resides in the cell membrane. Its function is as follows. Odorant receptor. This chain is Olfactory receptor 4K3 (OR4K3), found in Homo sapiens (Human).